The sequence spans 393 residues: Phosphoglycerate kinase (393 aa).

Substrate-binding positions include 21–23 (DLN), Arg-37, 60–63 (HLGR), Arg-115, and Arg-148. Residues Lys-199, Glu-321, and 347–350 (GGDT) each bind ATP.

This sequence belongs to the phosphoglycerate kinase family. In terms of assembly, monomer.

The protein resides in the cytoplasm. It carries out the reaction (2R)-3-phosphoglycerate + ATP = (2R)-3-phospho-glyceroyl phosphate + ADP. Its pathway is carbohydrate degradation; glycolysis; pyruvate from D-glyceraldehyde 3-phosphate: step 2/5. The chain is Phosphoglycerate kinase from Dechloromonas aromatica (strain RCB).